Reading from the N-terminus, the 144-residue chain is MKLNTLSPAAGAKSAAKRVGRGIGSGLGKTAGRGHKGQKSRSGGGVRVGFEGGQMPLKIRLPKFGFTSRKAMVTAEIRVSELAKVNGDVVDLNALKDANLVTRNIQFAKVVLSGTIERPVTVKGLKVTKGARAAIEAAGGKIEE.

Positions 1–49 (MKLNTLSPAAGAKSAAKRVGRGIGSGLGKTAGRGHKGQKSRSGGGVRVG) are disordered. Residues 21 to 31 (RGIGSGLGKTA) show a composition bias toward gly residues.

The protein belongs to the universal ribosomal protein uL15 family. Part of the 50S ribosomal subunit.

Its function is as follows. Binds to the 23S rRNA. The sequence is that of Large ribosomal subunit protein uL15 from Shewanella loihica (strain ATCC BAA-1088 / PV-4).